An 814-amino-acid chain; its full sequence is Glycogen phosphorylase (814 aa).

Lysine 662 carries the post-translational modification N6-(pyridoxal phosphate)lysine.

Belongs to the glycogen phosphorylase family. It depends on pyridoxal 5'-phosphate as a cofactor.

It catalyses the reaction [(1-&gt;4)-alpha-D-glucosyl](n) + phosphate = [(1-&gt;4)-alpha-D-glucosyl](n-1) + alpha-D-glucose 1-phosphate. In terms of biological role, phosphorylase is an important allosteric enzyme in carbohydrate metabolism. Enzymes from different sources differ in their regulatory mechanisms and in their natural substrates. However, all known phosphorylases share catalytic and structural properties. This Chlamydia trachomatis serovar D (strain ATCC VR-885 / DSM 19411 / UW-3/Cx) protein is Glycogen phosphorylase (glgP).